Consider the following 246-residue polypeptide: mRNA-decapping protein g5R (246 aa).

Positions K91–K239 constitute a Nudix hydrolase domain. Residues G128–G149 carry the Nudix box motif. Mg(2+) is bound at residue E134. Residue E143 is the Nucleophile of the active site. The Mg(2+) site is built by E147 and E169.

This sequence belongs to the Nudix hydrolase family. DIPP subfamily. As to quaternary structure, interacts with host RPL23A. Mg(2+) is required as a cofactor. Requires Mn(2+) as cofactor.

The protein resides in the host rough endoplasmic reticulum. It carries out the reaction diphospho-myo-inositol polyphosphate + H2O = myo-inositol polyphosphate + phosphate.. Its function is as follows. Decapping enzyme required for the removal of the 5'-end m7GpppN cap tethered to viral and host mRNAs to allow their decay in cells. May therefore accelerate viral and cellular mRNA turnover to eliminate competing host mRNAs and allow stage-specific synthesis of viral proteins. Acceleration of the turnover of cellular transcripts may even promote the shutoff of host protein synthesis. In addition to the mRNA cap, g5R also efficiently hydrolyzes diphosphoinositol polyphosphates. Down-regulation of the level of PP-InsP5 (diphosphoinositol pentakisphosphate) may play a role in viral manipulation of the cellular secretory pathway, a step necessary for the formation of virions. Binds viral and cellular poly(A) mRNAs, thereby decreasing both types of mRNAs. In African swine fever virus (isolate Pig/Kenya/KEN-50/1950) (ASFV), this protein is mRNA-decapping protein g5R.